Here is a 247-residue protein sequence, read N- to C-terminus: Probable transcriptional regulatory protein ECA2494 (247 aa).

This sequence belongs to the TACO1 family.

Its subcellular location is the cytoplasm. The polypeptide is Probable transcriptional regulatory protein ECA2494 (Pectobacterium atrosepticum (strain SCRI 1043 / ATCC BAA-672) (Erwinia carotovora subsp. atroseptica)).